The primary structure comprises 257 residues: uncharacterized protein (257 aa).

A helical membrane pass occupies residues 6–26; the sequence is IFWLNLAAIIIISIVVSGDMF.

This sequence belongs to the staphylococcal tandem lipoprotein family.

It is found in the cell membrane. This is an uncharacterized protein from Staphylococcus aureus (strain NCTC 8325 / PS 47).